Reading from the N-terminus, the 448-residue chain is Neurexin-1b-beta (448 aa).

The first 38 residues, 1 to 38 (MFGGWRLVVWQIFSEIITRRLGFWICLYFAALSVGMIS), serve as a signal peptide directing secretion. Over 39–375 (GSEPLVRTRH…EVFRESNGTT (337 aa)) the chain is Extracellular. Residues 71 to 269 (STYVFGRQGG…DPNVRMEGSV (199 aa)) form the Laminin G-like domain. Residues 376–396 (GMVVGIVAGAALCILILLYAM) traverse the membrane as a helical segment. Topologically, residues 397–448 (YKYRNRDEGSYHVDESRNYICNSNGAALKEKNTADDDSGSKSKKNKNKEYYV) are cytoplasmic. The segment covering 426–436 (EKNTADDDSGS) has biased composition (basic and acidic residues). Residues 426–448 (EKNTADDDSGSKSKKNKNKEYYV) form a disordered region.

This sequence belongs to the neurexin family.

Its subcellular location is the membrane. Neuronal cell surface protein that may be involved in cell recognition and cell adhesion. May play a role in formation or maintenance of synaptic junctions. This chain is Neurexin-1b-beta (nrxn1b), found in Danio rerio (Zebrafish).